Reading from the N-terminus, the 353-residue chain is C-X-C chemokine receptor type 4 (353 aa).

Residues 1-22 are important for chemokine binding and signaling; the sequence is MEGIRIFTSDNYTEDDLGSGDY. The Extracellular segment spans residues 1-39; sequence MEGIRIFTSDNYTEDDLGSGDYDSMKEPCFREENAHFNR. The N-linked (GlcNAc...) asparagine glycan is linked to N11. At Y12 the chain carries Sulfotyrosine. S19 is a glycosylation site (O-linked (Xyl...) (chondroitin sulfate) serine). Y22 is subject to Sulfotyrosine. 2 disulfide bridges follow: C29–C275 and C110–C187. Residues 40–64 form a helical membrane-spanning segment; it reads IFLPTVYSIIFLTGIVGNGLVILVM. Topologically, residues 65-78 are cytoplasmic; sequence GYQKKLRSMTDKYR. The chain crosses the membrane as a helical span at residues 79–100; that stretch reads LHLSVADLLFVLTLPFWAVDAV. The segment at 95–98 is chemokine binding; that stretch reads WAVD. Residues 101–111 are Extracellular-facing; that stretch reads ANWYFGKFLCK. A helical transmembrane segment spans residues 112–131; sequence AVHVIYTVNLYSSVLILAFI. A chemokine binding region spans residues 114–118; it reads HVIYT. Over 132-155 the chain is Cytoplasmic; it reads SLDRYLAIVHATNSQKPRKLLAEK. The Important for signaling motif lies at 134–136; sequence DRY. The tract at residues 136 to 148 is involved in dimerization; when bound to chemokine; it reads YLAIVHATNSQKP. Residues 156–175 traverse the membrane as a helical segment; the sequence is VVYVGVWLPAVLLTIPDLIF. The Extracellular portion of the chain corresponds to 176–196; that stretch reads ADIKEVDERYICDRFYPSDLW. Residues 187–191 form a chemokine binding, important for signaling region; sequence CDRFY. The involved in dimerization stretch occupies residues 192 to 211; it reads PSDLWLVVFQFQHIVVGLLL. A helical transmembrane segment spans residues 197–217; sequence LVVFQFQHIVVGLLLPGIVIL. The Cytoplasmic portion of the chain corresponds to 218–242; the sequence is SCYCIIISKLSHSKGYQKRKALKTT. A helical membrane pass occupies residues 243–262; sequence VILILTFFACWLPYYIGISI. The Extracellular segment spans residues 263-283; the sequence is DSFILLEIIQQGCEFESTVHK. The interval 267–269 is involved in dimerization; the sequence is LLE. A helical transmembrane segment spans residues 284 to 303; sequence WISITEALAFFHCCLNPILY. Residues 304–353 are Cytoplasmic-facing; it reads AFLGAKFKTSAQHALTSVSRGSSLKILSKGKRGGHSSVSTESESSSFHSS. 2 positions are modified to phosphoserine: S320 and S322. 2 positions are modified to phosphoserine; by PKC and GRK6: S325 and S326. Residues 330–353 are disordered; that stretch reads LSKGKRGGHSSVSTESESSSFHSS. S331 is modified (phosphoserine; by GRK6). K332 is covalently cross-linked (Glycyl lysine isopeptide (Lys-Gly) (interchain with G-Cter in ubiquitin)). Positions 338–353 are enriched in low complexity; it reads HSSVSTESESSSFHSS. Position 340 is a phosphoserine; by GRK6 (S340). Residues S349 and S352 each carry the phosphoserine modification.

The protein belongs to the G-protein coupled receptor 1 family. As to quaternary structure, monomer. Can form homodimers. Interacts with CD164. Interacts with ARRB2; the interaction is dependent on the C-terminal phosphorylation of CXCR4 and allows activation of MAPK1 and MAPK3. Interacts with ARR3; the interaction is dependent on the C-terminal phosphorylation of CXCR4 and modulates calcium mobilization. Interacts with RNF113A; the interaction, enhanced by CXCL12, promotes CXCR4 ubiquitination and subsequent degradation. Interacts (via the cytoplasmic C-terminal) with ITCH (via the WW domains I and II); the interaction, enhanced by CXCL12, promotes CXCR4 ubiquitination and leads to its degradation. Interacts with extracellular ubiquitin. Interacts with DBN1; this interaction is enhanced by antigenic stimulation. Following LPS binding, may form a complex with GDF5, HSP90AA1 and HSPA8. Post-translationally, phosphorylated on agonist stimulation. Rapidly phosphorylated on serine and threonine residues in the C-terminal. Phosphorylation at Ser-325 and Ser-326 leads to recruitment of ITCH, ubiquitination and protein degradation. In terms of processing, ubiquitinated after ligand binding, leading to its degradation. Ubiquitinated by ITCH at the cell membrane on agonist stimulation. The ubiquitin-dependent mechanism, endosomal sorting complex required for transport (ESCRT), then targets CXCR4 for lysosomal degradation. This process is dependent also on prior Ser-/Thr-phosphorylation in the C-terminal of CXCR4. Also binding of ARRB1 to STAM negatively regulates CXCR4 sorting to lysosomes though modulating ubiquitination of SFR5S. Sulfation is required for efficient binding of CXCL12/SDF-1alpha and promotes its dimerization. Post-translationally, O- and N-glycosylated. N-glycosylation can mask coreceptor function. The O-glycosylation chondroitin sulfate attachment does not affect interaction with CXCL12/SDF-1alpha nor its coreceptor activity. As to expression, brain, heart, kidney, lung and liver.

Its subcellular location is the cell membrane. It localises to the cell junction. It is found in the early endosome. The protein resides in the late endosome. The protein localises to the lysosome. Its function is as follows. Receptor for the C-X-C chemokine CXCL12/SDF-1 that transduces a signal by increasing intracellular calcium ion levels and enhancing MAPK1/MAPK3 activation. Involved in the AKT signaling cascade. Plays a role in regulation of cell migration, e.g. during wound healing. Acts as a receptor for extracellular ubiquitin; leading to enhanced intracellular calcium ions and reduced cellular cAMP levels. Binds bacterial lipopolysaccharide (LPS) et mediates LPS-induced inflammatory response, including TNF secretion by monocytes. Involved in hematopoiesis and in cardiac ventricular septum formation. Also plays an essential role in vascularization of the gastrointestinal tract, probably by regulating vascular branching and/or remodeling processes in endothelial cells. Involved in cerebellar development. In the CNS, could mediate hippocampal-neuron survival. This chain is C-X-C chemokine receptor type 4 (CXCR4), found in Bos taurus (Bovine).